Reading from the N-terminus, the 596-residue chain is Aspartate--tRNA(Asp/Asn) ligase (596 aa).

Residue Glu172 coordinates L-aspartate. The aspartate stretch occupies residues 196 to 199; that stretch reads QLFK. L-aspartate is bound at residue Arg218. ATP-binding positions include 218–220 and Gln227; that span reads RDE. Residue His455 participates in L-aspartate binding. Glu489 serves as a coordination point for ATP. Position 496 (Arg496) interacts with L-aspartate. 541–544 contacts ATP; the sequence is GLDR.

Belongs to the class-II aminoacyl-tRNA synthetase family. Type 1 subfamily. Homodimer.

The protein resides in the cytoplasm. The catalysed reaction is tRNA(Asx) + L-aspartate + ATP = L-aspartyl-tRNA(Asx) + AMP + diphosphate. Functionally, aspartyl-tRNA synthetase with relaxed tRNA specificity since it is able to aspartylate not only its cognate tRNA(Asp) but also tRNA(Asn). Reaction proceeds in two steps: L-aspartate is first activated by ATP to form Asp-AMP and then transferred to the acceptor end of tRNA(Asp/Asn). This chain is Aspartate--tRNA(Asp/Asn) ligase, found in Bordetella avium (strain 197N).